The primary structure comprises 301 residues: Olfactory receptor 10AG1 (301 aa).

The Extracellular segment spans residues 1-16; that stretch reads MEFVLLGFSDIPNLHW. A helical membrane pass occupies residues 17–37; that stretch reads MLFSIFLLMYLMILMCNGIII. The Cytoplasmic segment spans residues 38-45; that stretch reads LLIKIHPA. Residues 46–66 form a helical membrane-spanning segment; it reads LQTPMYFFLSNFSLLEICYVT. Over 67-90 the chain is Extracellular; sequence IIIPRMLMDIWTQKGNISLFACAT. N-linked (GlcNAc...) asparagine glycosylation occurs at asparagine 82. Cysteine 88 and cysteine 180 are disulfide-bonded. Residues 91–111 form a helical membrane-spanning segment; sequence QMCFFLMLGGTECLLLTVMAY. Residues 112–130 are Cytoplasmic-facing; that stretch reads DRYVAICKPLQYPLVMNHK. The helical transmembrane segment at 131–151 threads the bilayer; it reads VCIQLIIASWTITIPVVIGET. The Extracellular segment spans residues 152-188; sequence CQIFLLPFCGTNTINHFFCDIPPILKLACGNIFVNEI. A helical membrane pass occupies residues 189-208; that stretch reads TVHVVAVVFITVPFLLIVVS. At 209–228 the chain is on the cytoplasmic side; sequence YGKIISNILKLSSARGKAKA. A helical transmembrane segment spans residues 229–249; the sequence is FSTCSSHLIVVILFFGAGTIT. The Extracellular segment spans residues 250–262; the sequence is YLQPKPHQFQRMG. A helical membrane pass occupies residues 263–283; sequence KLISLFYTILIPTLNPIIYTL. Residues 284 to 301 are Cytoplasmic-facing; it reads RNKDIMVALRKLLAKLLT.

The protein belongs to the G-protein coupled receptor 1 family.

The protein localises to the cell membrane. Odorant receptor. The protein is Olfactory receptor 10AG1 (OR10AG1) of Homo sapiens (Human).